A 478-amino-acid chain; its full sequence is Sugar transporter ERD6-like 18 (478 aa).

A run of 12 helical transmembrane segments spans residues 31-51, 71-91, 110-130, 133-153, 162-180, 188-208, 270-290, 306-326, 333-353, 367-387, 407-427, and 433-453; these read ITAC…SFGV, IAQF…GALF, LLCI…WLNF, ISSG…IAEI, FTFT…VYFS, ILAL…FFVP, TLVV…SAVL, IGST…VILV, PLLL…GVAF, VFTF…LGGL, IVTL…NFLL, and GTFY…WLLV.

The protein belongs to the major facilitator superfamily. Sugar transporter (TC 2.A.1.1) family. In terms of tissue distribution, expressed in leaf vasculature, stem and flowers.

The protein localises to the membrane. Functionally, sugar transporter. This is Sugar transporter ERD6-like 18 (SFP2) from Arabidopsis thaliana (Mouse-ear cress).